A 326-amino-acid polypeptide reads, in one-letter code: Aldo-keto reductase family 1 member D1 (326 aa).

Residues glycine 22 to tyrosine 26 and aspartate 52 each bind NADP(+). Tyrosine 26 is a binding site for substrate. 4 residues coordinate substrate: tyrosine 57, tryptophan 88, glutamate 119, and tyrosine 131. Tyrosine 57 serves as the catalytic Proton donor. NADP(+) is bound by residues serine 168–asparagine 169, glutamine 192, and tyrosine 219–threonine 224. Tryptophan 230 lines the substrate pocket. Lysine 273–asparagine 283 serves as a coordination point for NADP(+).

The protein belongs to the aldo/keto reductase family. The N-terminus is blocked.

The protein resides in the cytoplasm. The enzyme catalyses 5beta-cholestan-3-one + NADP(+) = cholest-4-en-3-one + NADPH + H(+). It carries out the reaction 4,5beta-dihydrocortisone + NADP(+) = cortisone + NADPH + H(+). It catalyses the reaction cortisol + NADPH + H(+) = 5beta-dihydrocortisol + NADP(+). The catalysed reaction is corticosterone + NADPH + H(+) = 5beta-dihydrocorticosterone + NADP(+). The enzyme catalyses 7alpha,12alpha-dihydroxycholest-4-en-3-one + NADPH + H(+) = 7alpha,12alpha-dihydroxy-5beta-cholestan-3-one + NADP(+). It carries out the reaction 7alpha-hydroxycholest-4-en-3-one + NADPH + H(+) = 7alpha-hydroxy-5beta-cholestan-3-one + NADP(+). It catalyses the reaction epitestosterone + NADPH + H(+) = 5beta-dihydroepitestosterone + NADP(+). The catalysed reaction is androst-4-ene-3,17-dione + NADPH + H(+) = 5beta-androstane-3,17-dione + NADP(+). The enzyme catalyses progesterone + NADPH + H(+) = 5beta-pregnan-3,20-dione + NADP(+). It carries out the reaction 21-hydroxyprogesterone + NADPH + H(+) = 5beta-dihydrodeoxycorticosterone + NADP(+). It catalyses the reaction aldosterone + NADPH + H(+) = 5beta-dihydroaldosterone + NADP(+). The catalysed reaction is 17beta-hydroxyandrosta-1,4-dien-3-one + NADPH + H(+) = 17beta-hydroxy-5beta-androst-1-en-3-one + NADP(+). The enzyme catalyses 17beta-hydroxyestr-4-en-3-one + NADPH + H(+) = 17beta-hydroxy-5beta-estran-3-one + NADP(+). It carries out the reaction 5beta-dihydrotestosterone + NADP(+) = testosterone + NADPH + H(+). It catalyses the reaction androst-4-ene-3,11,17-trione + NADPH + H(+) = 17beta-hydroxyandrost-4-ene-3,11-dione + NADP(+). With respect to regulation, subject to inhibition by high substrate concentrations. Inhibited by testosterone concentrations above 10 uM. Inhibited by the primary and secondary bile acids chenodeoxycholic acid and ursodeoxycholic acid. In terms of biological role, catalyzes the stereospecific NADPH-dependent reduction of the C4-C5 double bond of bile acid intermediates and steroid hormones carrying a delta(4)-3-one structure to yield an A/B cis-ring junction. This cis-configuration is crucial for bile acid biosynthesis and plays important roles in steroid metabolism. Capable of reducing a broad range of delta-(4)-3-ketosteroids from C18 (such as, 17beta-hydroxyestr-4-en-3-one) to C27 (such as, 7alpha-hydroxycholest-4-en-3-one). This Rattus norvegicus (Rat) protein is Aldo-keto reductase family 1 member D1 (Akr1d1).